We begin with the raw amino-acid sequence, 500 residues long: Glycerol kinase (500 aa).

Threonine 12 provides a ligand contact to ADP. Positions 12, 13, and 14 each coordinate ATP. Threonine 12 lines the sn-glycerol 3-phosphate pocket. Arginine 16 is a binding site for ADP. The sn-glycerol 3-phosphate site is built by arginine 82, glutamate 83, tyrosine 135, and aspartate 245. Positions 82, 83, 135, 245, and 246 each coordinate glycerol. Threonine 267 and glycine 310 together coordinate ADP. The ATP site is built by threonine 267, glycine 310, glutamine 314, and glycine 411. The ADP site is built by glycine 411 and asparagine 415.

This sequence belongs to the FGGY kinase family. In terms of assembly, homotetramer and homodimer (in equilibrium).

The enzyme catalyses glycerol + ATP = sn-glycerol 3-phosphate + ADP + H(+). It functions in the pathway polyol metabolism; glycerol degradation via glycerol kinase pathway; sn-glycerol 3-phosphate from glycerol: step 1/1. Its activity is regulated as follows. Activated by phosphorylation and inhibited by fructose 1,6-bisphosphate (FBP). Key enzyme in the regulation of glycerol uptake and metabolism. Catalyzes the phosphorylation of glycerol to yield sn-glycerol 3-phosphate. The chain is Glycerol kinase from Clostridium perfringens (strain SM101 / Type A).